The sequence spans 289 residues: D-alanine aminotransferase (289 aa).

Substrate is bound at residue Tyr-31. Position 50 (Arg-50) interacts with pyridoxal 5'-phosphate. Positions 99 and 101 each coordinate substrate. Residue Lys-147 is the Proton acceptor of the active site. Lys-147 bears the N6-(pyridoxal phosphate)lysine mark. Position 179 (Glu-179) interacts with pyridoxal 5'-phosphate.

This sequence belongs to the class-IV pyridoxal-phosphate-dependent aminotransferase family. In terms of assembly, homodimer. The cofactor is pyridoxal 5'-phosphate.

The enzyme catalyses D-alanine + 2-oxoglutarate = D-glutamate + pyruvate. Functionally, acts on the D-isomers of alanine, leucine, aspartate, glutamate, aminobutyrate, norvaline and asparagine. The enzyme transfers an amino group from a substrate D-amino acid to the pyridoxal phosphate cofactor to form pyridoxamine and an alpha-keto acid in the first half-reaction. The second half-reaction is the reverse of the first, transferring the amino group from the pyridoxamine to a second alpha-keto acid to form the product D-amino acid via a ping-pong mechanism. This is an important process in the formation of D-alanine and D-glutamate, which are essential bacterial cell wall components. The protein is D-alanine aminotransferase (dat) of Listeria innocua serovar 6a (strain ATCC BAA-680 / CLIP 11262).